The primary structure comprises 161 residues: Endoribonuclease YbeY (161 aa).

Positions 120, 124, and 130 each coordinate Zn(2+).

It belongs to the endoribonuclease YbeY family. The cofactor is Zn(2+).

The protein localises to the cytoplasm. Its function is as follows. Single strand-specific metallo-endoribonuclease involved in late-stage 70S ribosome quality control and in maturation of the 3' terminus of the 16S rRNA. The sequence is that of Endoribonuclease YbeY from Chlamydia trachomatis serovar L2 (strain ATCC VR-902B / DSM 19102 / 434/Bu).